A 94-amino-acid chain; its full sequence is uncharacterized protein (94 aa).

A signal peptide spans Met-1–Ala-19.

This sequence belongs to the protease inhibitor I9 family.

This is an uncharacterized protein from Neurospora crassa (strain ATCC 24698 / 74-OR23-1A / CBS 708.71 / DSM 1257 / FGSC 987).